The sequence spans 309 residues: (S)-sulfolactate dehydrogenase (309 aa).

NAD(+) contacts are provided by residues 151 to 152, Asp-171, 231 to 233, and Asp-257; these read GI and TAR. The active site involves Arg-233. Glu-262 is a catalytic residue. His-281 acts as the Proton donor in catalysis. Residue 281–284 participates in NAD(+) binding; sequence HIAG.

This sequence belongs to the D-isomer specific 2-hydroxyacid dehydrogenase family.

It catalyses the reaction (2S)-3-sulfolactate + NAD(+) = 3-sulfopyruvate + NADH + H(+). Its function is as follows. Dehydrogenase of the (R,S)-sulfolactate degradation pathway that only acts on the (S)-enantiomer of 3-sulfolactate. Together with ComC, provides a racemase system that converts (2S)-3-sulfolactate to (2R)-3-sulfolactate, which is degraded further by (2R)-sulfolactate sulfo-lyase. Specific for NAD. Also able to form sulfolactate from sulfopyruvate. This is (S)-sulfolactate dehydrogenase (slcC) from Chromohalobacter salexigens (strain ATCC BAA-138 / DSM 3043 / CIP 106854 / NCIMB 13768 / 1H11).